We begin with the raw amino-acid sequence, 804 residues long: Leucine--tRNA ligase (804 aa).

The 'HIGH' region signature appears at 40–51 (PYPSGAGLHVGH). Residues 574–578 (KMSKS) carry the 'KMSKS' region motif. An ATP-binding site is contributed by K577.

Belongs to the class-I aminoacyl-tRNA synthetase family.

The protein localises to the cytoplasm. It catalyses the reaction tRNA(Leu) + L-leucine + ATP = L-leucyl-tRNA(Leu) + AMP + diphosphate. In Shouchella clausii (strain KSM-K16) (Alkalihalobacillus clausii), this protein is Leucine--tRNA ligase.